The primary structure comprises 595 residues: FERM domain-containing protein 3 (595 aa).

Residues 32 to 312 (MKCTIRLLDD…ENQAFYKYAK (281 aa)) form the FERM domain. A helical transmembrane segment spans residues 529–549 (LLVVGLGLLLFVFPLLLLLLE).

It is found in the membrane. Its function is as follows. Putative tumor suppressor gene that may be implicated in the origin and progression of lung cancer. The chain is FERM domain-containing protein 3 (Frmd3) from Mus musculus (Mouse).